The primary structure comprises 483 residues: Bromoperoxidase-catalase (483 aa).

The interval 1–24 (MTQGPLTTEAGAPVADNQNSETAG) is disordered. Active-site residues include H54 and N127. Residue Y337 coordinates heme.

It belongs to the catalase family.

The catalysed reaction is 2 H2O2 = O2 + 2 H2O. The sequence is that of Bromoperoxidase-catalase (bca) from Streptomyces venezuelae (strain ATCC 10712 / CBS 650.69 / DSM 40230 / JCM 4526 / NBRC 13096 / PD 04745).